The primary structure comprises 444 residues: Ribulose bisphosphate carboxylase (444 aa).

Catalysis depends on K163, which acts as the Proton acceptor. K165 provides a ligand contact to substrate. Mg(2+) contacts are provided by K189, D191, and E192. Position 189 is an N6-carboxylysine (K189). The active-site Proton acceptor is H281. Substrate-binding positions include R282, H314, 367 to 369 (SGG), and 389 to 392 (QLGG).

Belongs to the RuBisCO large chain family. Type III subfamily. Homodimer or homodecamer. In contrast to form I RuBisCO, the form III RuBisCO is composed solely of large subunits. The cofactor is Mg(2+).

The catalysed reaction is 2 (2R)-3-phosphoglycerate + 2 H(+) = D-ribulose 1,5-bisphosphate + CO2 + H2O. It catalyses the reaction D-ribulose 1,5-bisphosphate + O2 = 2-phosphoglycolate + (2R)-3-phosphoglycerate + 2 H(+). In terms of biological role, catalyzes the addition of molecular CO(2) and H(2)O to ribulose 1,5-bisphosphate (RuBP), generating two molecules of 3-phosphoglycerate (3-PGA). Functions in an archaeal AMP degradation pathway, together with AMP phosphorylase and R15P isomerase. The chain is Ribulose bisphosphate carboxylase from Thermococcus onnurineus (strain NA1).